Consider the following 209-residue polypeptide: uncharacterized protein (209 aa).

The next 3 helical transmembrane spans lie at 10–32 (AVVI…YLAF), 37–59 (LRYV…TGLI), and 64–86 (FIYF…ILYV).

Its subcellular location is the cell membrane. This is an uncharacterized protein from Aquifex aeolicus (strain VF5).